A 153-amino-acid polypeptide reads, in one-letter code: Aspartate carbamoyltransferase regulatory chain (153 aa).

4 residues coordinate Zn(2+): C109, C114, C138, and C141.

This sequence belongs to the PyrI family. Contains catalytic and regulatory chains. Zn(2+) is required as a cofactor.

Involved in allosteric regulation of aspartate carbamoyltransferase. This Wigglesworthia glossinidia brevipalpis protein is Aspartate carbamoyltransferase regulatory chain.